A 263-amino-acid polypeptide reads, in one-letter code: Small ribosomal subunit protein uS2m (263 aa).

The transit peptide at 1–15 (MLSRKLSPEQLVARR) directs the protein to the mitochondrion.

It belongs to the universal ribosomal protein uS2 family. In terms of assembly, component of the mitochondrial small ribosomal subunit (mt-SSU). Mature yeast 74S mitochondrial ribosomes consist of a small (37S) and a large (54S) subunit. The 37S small subunit contains a 15S ribosomal RNA (15S mt-rRNA) and at least 32 different proteins. The 54S large subunit contains a 21S rRNA (21S mt-rRNA) and at least 45 different proteins.

The protein resides in the mitochondrion. Component of the mitochondrial ribosome (mitoribosome), a dedicated translation machinery responsible for the synthesis of mitochondrial genome-encoded proteins, including at least some of the essential transmembrane subunits of the mitochondrial respiratory chain. The mitoribosomes are attached to the mitochondrial inner membrane and translation products are cotranslationally integrated into the membrane. The chain is Small ribosomal subunit protein uS2m from Schizosaccharomyces pombe (strain 972 / ATCC 24843) (Fission yeast).